We begin with the raw amino-acid sequence, 199 residues long: 7-methyl-GTP pyrophosphatase (199 aa).

Residue Asp76 is the Proton acceptor of the active site.

It belongs to the Maf family. YceF subfamily. The cofactor is a divalent metal cation.

Its subcellular location is the cytoplasm. The catalysed reaction is N(7)-methyl-GTP + H2O = N(7)-methyl-GMP + diphosphate + H(+). Its function is as follows. Nucleoside triphosphate pyrophosphatase that hydrolyzes 7-methyl-GTP (m(7)GTP). May have a dual role in cell division arrest and in preventing the incorporation of modified nucleotides into cellular nucleic acids. In Rhizobium meliloti (strain 1021) (Ensifer meliloti), this protein is 7-methyl-GTP pyrophosphatase.